We begin with the raw amino-acid sequence, 303 residues long: Acetylglutamate kinase (303 aa).

Residues 76 to 77 (GG), arginine 98, and asparagine 192 contribute to the substrate site.

The protein belongs to the acetylglutamate kinase family. ArgB subfamily.

Its subcellular location is the cytoplasm. It catalyses the reaction N-acetyl-L-glutamate + ATP = N-acetyl-L-glutamyl 5-phosphate + ADP. The protein operates within amino-acid biosynthesis; L-arginine biosynthesis; N(2)-acetyl-L-ornithine from L-glutamate: step 2/4. Catalyzes the ATP-dependent phosphorylation of N-acetyl-L-glutamate. The chain is Acetylglutamate kinase from Chlorobium phaeobacteroides (strain DSM 266 / SMG 266 / 2430).